The following is a 336-amino-acid chain: 3-isopropylmalate dehydrogenase (336 aa).

4 residues coordinate substrate: arginine 87, arginine 97, arginine 121, and aspartate 211. Aspartate 211, aspartate 235, and aspartate 239 together coordinate Mg(2+). Residue 271 to 283 participates in NAD(+) binding; sequence GSAPDIAGQGIAD.

This sequence belongs to the isocitrate and isopropylmalate dehydrogenases family. LeuB type 2 subfamily. Homodimer. The cofactor is Mg(2+). Mn(2+) is required as a cofactor.

Its subcellular location is the cytoplasm. The catalysed reaction is (2R,3S)-3-isopropylmalate + NAD(+) = 4-methyl-2-oxopentanoate + CO2 + NADH. Its pathway is amino-acid biosynthesis; L-leucine biosynthesis; L-leucine from 3-methyl-2-oxobutanoate: step 3/4. Functionally, catalyzes the oxidation of 3-carboxy-2-hydroxy-4-methylpentanoate (3-isopropylmalate) to 3-carboxy-4-methyl-2-oxopentanoate. The product decarboxylates to 4-methyl-2 oxopentanoate. This is 3-isopropylmalate dehydrogenase from Rhodococcus jostii (strain RHA1).